Consider the following 160-residue polypeptide: Large ribosomal subunit protein uL22c (160 aa).

It belongs to the universal ribosomal protein uL22 family. Part of the 50S ribosomal subunit.

The protein localises to the plastid. Its subcellular location is the chloroplast. Its function is as follows. This protein binds specifically to 23S rRNA. In terms of biological role, the globular domain of the protein is located near the polypeptide exit tunnel on the outside of the subunit, while an extended beta-hairpin is found that lines the wall of the exit tunnel in the center of the 70S ribosome. This chain is Large ribosomal subunit protein uL22c (rpl22), found in Aethionema grandiflorum (Persian stone-cress).